A 425-amino-acid chain; its full sequence is Histidine--tRNA ligase 1 (425 aa).

The protein belongs to the class-II aminoacyl-tRNA synthetase family. In terms of assembly, homodimer.

The protein resides in the cytoplasm. It carries out the reaction tRNA(His) + L-histidine + ATP = L-histidyl-tRNA(His) + AMP + diphosphate + H(+). The chain is Histidine--tRNA ligase 1 from Bacillus thuringiensis subsp. konkukian (strain 97-27).